Reading from the N-terminus, the 175-residue chain is Protein GrpE (175 aa).

The protein belongs to the GrpE family. As to quaternary structure, homodimer.

It is found in the cytoplasm. Participates actively in the response to hyperosmotic and heat shock by preventing the aggregation of stress-denatured proteins, in association with DnaK and GrpE. It is the nucleotide exchange factor for DnaK and may function as a thermosensor. Unfolded proteins bind initially to DnaJ; upon interaction with the DnaJ-bound protein, DnaK hydrolyzes its bound ATP, resulting in the formation of a stable complex. GrpE releases ADP from DnaK; ATP binding to DnaK triggers the release of the substrate protein, thus completing the reaction cycle. Several rounds of ATP-dependent interactions between DnaJ, DnaK and GrpE are required for fully efficient folding. The sequence is that of Protein GrpE from Thermoplasma acidophilum (strain ATCC 25905 / DSM 1728 / JCM 9062 / NBRC 15155 / AMRC-C165).